We begin with the raw amino-acid sequence, 444 residues long: UDP-N-acetylmuramate--L-alanine ligase (444 aa).

Residue 110-116 participates in ATP binding; that stretch reads GAHGKTS.

Belongs to the MurCDEF family.

It localises to the cytoplasm. It catalyses the reaction UDP-N-acetyl-alpha-D-muramate + L-alanine + ATP = UDP-N-acetyl-alpha-D-muramoyl-L-alanine + ADP + phosphate + H(+). The protein operates within cell wall biogenesis; peptidoglycan biosynthesis. In terms of biological role, cell wall formation. The chain is UDP-N-acetylmuramate--L-alanine ligase from Streptococcus sanguinis (strain SK36).